The primary structure comprises 349 residues: Fe(3+) ions import ATP-binding protein FbpC (349 aa).

Positions 4–236 constitute an ABC transporter domain; sequence LELHHIGKSY…PVDEPTATFL (233 aa). 36–43 serves as a coordination point for ATP; that stretch reads GPSGSGKT.

The protein belongs to the ABC transporter superfamily. Fe(3+) ion importer (TC 3.A.1.10) family. As to quaternary structure, the complex is composed of two ATP-binding proteins (FbpC), two transmembrane proteins (FbpB) and a solute-binding protein (FbpA).

It is found in the cell inner membrane. The catalysed reaction is Fe(3+)(out) + ATP + H2O = Fe(3+)(in) + ADP + phosphate + H(+). Part of the ABC transporter complex FbpABC involved in Fe(3+) ions import. Responsible for energy coupling to the transport system. This chain is Fe(3+) ions import ATP-binding protein FbpC, found in Yersinia pseudotuberculosis serotype I (strain IP32953).